We begin with the raw amino-acid sequence, 654 residues long: Pentatricopeptide repeat-containing protein At5g61400 (654 aa).

16 PPR repeats span residues 37–71 (SSFS…RVSK), 74–104 (DLQS…LIER), 131–161 (SIGV…MKCS), 163–197 (DSKA…GLVP), 198–232 (DVHI…GIKP), 233–267 (NVYI…GVLP), 268–302 (NLYT…ELLP), 303–337 (NVVV…GVDP), 338–372 (NLYV…NLSP), 373–407 (DVFT…RIFP), 408–442 (SSAT…GVEP), 443–477 (NIIT…GIVP), 478–512 (DVVT…GIHP), 513–543 (NDHT…NNQQ), 548–582 (NHVG…GITP), and 583–617 (DICS…GILP).

It belongs to the PPR family. P subfamily.

The protein is Pentatricopeptide repeat-containing protein At5g61400 of Arabidopsis thaliana (Mouse-ear cress).